The sequence spans 692 residues: DNA ligase (692 aa).

Residues 40 to 44 (DAAYD), 89 to 90 (SL), and Glu121 each bind NAD(+). Lys123 acts as the N6-AMP-lysine intermediate in catalysis. NAD(+) is bound by residues Arg144, Glu181, Lys297, and Lys321. Zn(2+)-binding residues include Cys415, Cys417, Cys439, and Cys445. Positions 614–692 (KTDTAVAGKT…EDEWLEMVGS (79 aa)) constitute a BRCT domain.

This sequence belongs to the NAD-dependent DNA ligase family. LigA subfamily. It depends on Mg(2+) as a cofactor. Mn(2+) is required as a cofactor.

The enzyme catalyses NAD(+) + (deoxyribonucleotide)n-3'-hydroxyl + 5'-phospho-(deoxyribonucleotide)m = (deoxyribonucleotide)n+m + AMP + beta-nicotinamide D-nucleotide.. In terms of biological role, DNA ligase that catalyzes the formation of phosphodiester linkages between 5'-phosphoryl and 3'-hydroxyl groups in double-stranded DNA using NAD as a coenzyme and as the energy source for the reaction. It is essential for DNA replication and repair of damaged DNA. The protein is DNA ligase of Phenylobacterium zucineum (strain HLK1).